Consider the following 78-residue polypeptide: RNA-binding protein Hfq (78 aa).

Residues 10-69 (DPFLNTLRKEHVPVSIYLVNGIKLQGQIESFDQYVVLLRNTVTQMVYKHAISTVVPARAV) enclose the Sm domain.

Belongs to the Hfq family. Homohexamer.

Functionally, RNA chaperone that binds small regulatory RNA (sRNAs) and mRNAs to facilitate mRNA translational regulation in response to envelope stress, environmental stress and changes in metabolite concentrations. Also binds with high specificity to tRNAs. This chain is RNA-binding protein Hfq, found in Bordetella avium (strain 197N).